We begin with the raw amino-acid sequence, 496 residues long: Probable cytosol aminopeptidase (496 aa).

Mn(2+)-binding residues include lysine 266 and aspartate 271. Lysine 278 is an active-site residue. Aspartate 290, aspartate 349, and glutamate 351 together coordinate Mn(2+). Arginine 353 is a catalytic residue.

It belongs to the peptidase M17 family. Mn(2+) serves as cofactor.

Its subcellular location is the cytoplasm. The enzyme catalyses Release of an N-terminal amino acid, Xaa-|-Yaa-, in which Xaa is preferably Leu, but may be other amino acids including Pro although not Arg or Lys, and Yaa may be Pro. Amino acid amides and methyl esters are also readily hydrolyzed, but rates on arylamides are exceedingly low.. It catalyses the reaction Release of an N-terminal amino acid, preferentially leucine, but not glutamic or aspartic acids.. In terms of biological role, presumably involved in the processing and regular turnover of intracellular proteins. Catalyzes the removal of unsubstituted N-terminal amino acids from various peptides. This is Probable cytosol aminopeptidase from Trichodesmium erythraeum (strain IMS101).